The following is a 546-amino-acid chain: Chaperonin GroEL 6 (546 aa).

ATP is bound by residues threonine 30 to proline 33, lysine 51, aspartate 87 to threonine 91, glycine 415, and aspartate 496.

This sequence belongs to the chaperonin (HSP60) family. As to quaternary structure, forms a cylinder of 14 subunits composed of two heptameric rings stacked back-to-back. Interacts with the co-chaperonin GroES.

Its subcellular location is the cytoplasm. It carries out the reaction ATP + H2O + a folded polypeptide = ADP + phosphate + an unfolded polypeptide.. Functionally, together with its co-chaperonin GroES, plays an essential role in assisting protein folding. The GroEL-GroES system forms a nano-cage that allows encapsulation of the non-native substrate proteins and provides a physical environment optimized to promote and accelerate protein folding. The polypeptide is Chaperonin GroEL 6 (Bradyrhizobium diazoefficiens (strain JCM 10833 / BCRC 13528 / IAM 13628 / NBRC 14792 / USDA 110)).